The following is a 236-amino-acid chain: Phosphoribosylformylglycinamidine synthase subunit PurQ (236 aa).

The 233-residue stretch at 2–234 (RFAVVTFPGS…LSVGLEVAHS (233 aa)) folds into the Glutamine amidotransferase type-1 domain. Residue Cys-86 is the Nucleophile of the active site. Active-site residues include His-203 and Glu-205.

Part of the FGAM synthase complex composed of 1 PurL, 1 PurQ and 2 PurS subunits.

It localises to the cytoplasm. The catalysed reaction is N(2)-formyl-N(1)-(5-phospho-beta-D-ribosyl)glycinamide + L-glutamine + ATP + H2O = 2-formamido-N(1)-(5-O-phospho-beta-D-ribosyl)acetamidine + L-glutamate + ADP + phosphate + H(+). The enzyme catalyses L-glutamine + H2O = L-glutamate + NH4(+). Its pathway is purine metabolism; IMP biosynthesis via de novo pathway; 5-amino-1-(5-phospho-D-ribosyl)imidazole from N(2)-formyl-N(1)-(5-phospho-D-ribosyl)glycinamide: step 1/2. Functionally, part of the phosphoribosylformylglycinamidine synthase complex involved in the purines biosynthetic pathway. Catalyzes the ATP-dependent conversion of formylglycinamide ribonucleotide (FGAR) and glutamine to yield formylglycinamidine ribonucleotide (FGAM) and glutamate. The FGAM synthase complex is composed of three subunits. PurQ produces an ammonia molecule by converting glutamine to glutamate. PurL transfers the ammonia molecule to FGAR to form FGAM in an ATP-dependent manner. PurS interacts with PurQ and PurL and is thought to assist in the transfer of the ammonia molecule from PurQ to PurL. In Thermomicrobium roseum (strain ATCC 27502 / DSM 5159 / P-2), this protein is Phosphoribosylformylglycinamidine synthase subunit PurQ.